The sequence spans 340 residues: tRNA N6-adenosine threonylcarbamoyltransferase (340 aa).

Residues histidine 111 and histidine 115 each coordinate Fe cation. Residues 134-138 (LVSGG), aspartate 167, glycine 180, and asparagine 272 each bind substrate. Residue aspartate 300 participates in Fe cation binding.

It belongs to the KAE1 / TsaD family. Requires Fe(2+) as cofactor.

It is found in the cytoplasm. It catalyses the reaction L-threonylcarbamoyladenylate + adenosine(37) in tRNA = N(6)-L-threonylcarbamoyladenosine(37) in tRNA + AMP + H(+). Functionally, required for the formation of a threonylcarbamoyl group on adenosine at position 37 (t(6)A37) in tRNAs that read codons beginning with adenine. Is involved in the transfer of the threonylcarbamoyl moiety of threonylcarbamoyl-AMP (TC-AMP) to the N6 group of A37, together with TsaE and TsaB. TsaD likely plays a direct catalytic role in this reaction. In Proteus mirabilis (strain HI4320), this protein is tRNA N6-adenosine threonylcarbamoyltransferase.